The primary structure comprises 700 residues: Elongation factor G (700 aa).

The tr-type G domain maps to E8–T290. GTP-binding positions include A17–T24, D88–H92, and N142–D145.

The protein belongs to the TRAFAC class translation factor GTPase superfamily. Classic translation factor GTPase family. EF-G/EF-2 subfamily.

Its subcellular location is the cytoplasm. Catalyzes the GTP-dependent ribosomal translocation step during translation elongation. During this step, the ribosome changes from the pre-translocational (PRE) to the post-translocational (POST) state as the newly formed A-site-bound peptidyl-tRNA and P-site-bound deacylated tRNA move to the P and E sites, respectively. Catalyzes the coordinated movement of the two tRNA molecules, the mRNA and conformational changes in the ribosome. This Haemophilus influenzae (strain 86-028NP) protein is Elongation factor G.